We begin with the raw amino-acid sequence, 317 residues long: Ciliary microtubule inner protein 2A (317 aa).

Residues 131–153 (TPDTPHPPCPPGRKGDSRDLGHP) are disordered.

It belongs to the CIMIP2 family. As to quaternary structure, microtubule inner protein component of sperm flagellar doublet microtubules.

Its subcellular location is the cytoplasm. It is found in the cytoskeleton. The protein localises to the flagellum axoneme. Functionally, microtubule inner protein (MIP) part of the dynein-decorated doublet microtubules (DMTs) in flagellum axoneme. Binds to the intra-tubulin interfaces. In Homo sapiens (Human), this protein is Ciliary microtubule inner protein 2A.